We begin with the raw amino-acid sequence, 207 residues long: LexA repressor (207 aa).

Residues 28–48 (VREIGEAVGLASSSTVHGHLS) constitute a DNA-binding region (H-T-H motif). Active-site for autocatalytic cleavage activity residues include S130 and K168.

It belongs to the peptidase S24 family. In terms of assembly, homodimer.

It catalyses the reaction Hydrolysis of Ala-|-Gly bond in repressor LexA.. Functionally, represses a number of genes involved in the response to DNA damage (SOS response), including recA and lexA. In the presence of single-stranded DNA, RecA interacts with LexA causing an autocatalytic cleavage which disrupts the DNA-binding part of LexA, leading to derepression of the SOS regulon and eventually DNA repair. The polypeptide is LexA repressor (Staphylococcus haemolyticus (strain JCSC1435)).